A 793-amino-acid polypeptide reads, in one-letter code: Putative potassium transporter 12 (793 aa).

Residues 1-54 (MASISDSETTNHGSIWDLDQNLDQPMDEEASRLKNMYTEKKFSSILLLRLAFQS) lie on the Cytoplasmic side of the membrane. The helical transmembrane segment at 55–75 (LGVVFGDLGTSPLYVFYNIFP) threads the bilayer. Topologically, residues 76–87 (HGVDDDEDVIGA) are extracellular. The chain crosses the membrane as a helical span at residues 88–108 (LSLIIYTLTLIPLMKYVFVVL). Residues 109-175 (RANDNGQGGT…EGHVYKKNCL (67 aa)) lie on the Cytoplasmic side of the membrane. Residues 176 to 196 (LILVLIGTCTAIGDGILTPAI) traverse the membrane as a helical segment. At 197 to 215 (SVLSASGGIRVQNQKMSTD) the chain is on the extracellular side. The helical transmembrane segment at 216-236 (VVVVVAVIILIGLFSMQHYGT) threads the bilayer. The Cytoplasmic portion of the chain corresponds to 237-238 (DK). A helical membrane pass occupies residues 239–259 (VGWLFAPIVLLWFILIGTIGA). Residues 260–289 (LNIHKYNSSVLKAYNPVYIYRYFRRGKSES) lie on the Extracellular side of the membrane. N-linked (GlcNAc...) asparagine glycosylation occurs at N266. Residues 290–310 (WTSLGGIMLSITGTEALYADL) traverse the membrane as a helical segment. Over 311–315 (CHFPV) the chain is Cytoplasmic. Residues 316 to 338 (LAIQIAFTLVVFPCLLLAYTGQA) form a helical membrane-spanning segment. Topologically, residues 339 to 359 (AYIISNKDHVVDAFYRSIPDT) are extracellular. Residues 360-380 (IYWPVFIIATLAAIVASQATI) form a helical membrane-spanning segment. Topologically, residues 381–411 (SATYSIIKQALALGCFPRVSVVHTSKKFLGQ) are cytoplasmic. Residues 412 to 432 (IYIPDINWVLMILCIAVTAGF) traverse the membrane as a helical segment. The Extracellular segment spans residues 433–444 (KNQSQIGNAYGT). N-linked (GlcNAc...) asparagine glycosylation occurs at N434. Residues 445–465 (AVVIVMLVTTFLMVPIMLLVW) form a helical membrane-spanning segment. The Cytoplasmic portion of the chain corresponds to 466 to 468 (KSH). Residues 469 to 489 (WILVVIFIVLSLMVELPYFTA) traverse the membrane as a helical segment. Residues 490–496 (CINKVDQ) lie on the Extracellular side of the membrane. A helical membrane pass occupies residues 497–517 (GGWVPLVVATTCFIIMYVWHF). The Cytoplasmic segment spans residues 518–793 (CTVKRYEFEM…LLNVGQIYYI (276 aa)).

This sequence belongs to the HAK/KUP transporter (TC 2.A.72.3) family.

It is found in the membrane. Functionally, high-affinity potassium transporter. The polypeptide is Putative potassium transporter 12 (HAK12) (Oryza sativa subsp. japonica (Rice)).